The primary structure comprises 122 residues: Large ribosomal subunit protein uL14 (122 aa).

It belongs to the universal ribosomal protein uL14 family. As to quaternary structure, part of the 50S ribosomal subunit. Forms a cluster with proteins L3 and L19. In the 70S ribosome, L14 and L19 interact and together make contacts with the 16S rRNA in bridges B5 and B8.

Its function is as follows. Binds to 23S rRNA. Forms part of two intersubunit bridges in the 70S ribosome. The chain is Large ribosomal subunit protein uL14 from Agrobacterium fabrum (strain C58 / ATCC 33970) (Agrobacterium tumefaciens (strain C58)).